Consider the following 314-residue polypeptide: MRGRVAGSCAPLGLLLVCLRLPGLFARSIGAVEEKVSQNLGTNLPQLGQPSLTGPPNSEHPQPALDLRSNDLARAPLKLSVPPSDGFPPAGGSAVQRWPLSGRLPAMYSWPPEDPWLMMAAAAADRLGEALPEELSYLSSAAALAPGSGPLPGESSPDATDLSPEASHLHQDSESRRLPRSNPLGPGGKILSQRPPWSLIYRVLPDHPWGTLNPSVSWGGGGPGTGWGTRPMPHPGGIWGINNQPPGTSWGNINRYPGGSWGNINRYPGGSWGNIHLYPGINNPFPPGVLRPPGSSWNTPAGFPNPPSPGLQWG.

Residues 1–26 form the signal peptide; sequence MRGRVAGSCAPLGLLLVCLRLPGLFA. Residues 41–60 show a composition bias toward polar residues; that stretch reads GTNLPQLGQPSLTGPPNSEH. Disordered regions lie at residues 41–65, 77–96, 147–191, and 292–314; these read GTNL…QPAL, LKLS…SAVQ, GSGP…GKIL, and PPGS…LQWG. The segment covering 147–157 has biased composition (low complexity); it reads GSGPLPGESSP. Residues 167-177 show a composition bias toward basic and acidic residues; it reads SHLHQDSESRR. The segment covering 303-314 has biased composition (pro residues); sequence FPNPPSPGLQWG.

In terms of assembly, binds to numerous extracellular matrix proteins. In terms of tissue distribution, taste cell specific.

It is found in the secreted. The protein resides in the extracellular space. The protein localises to the extracellular matrix. This is an uncharacterized protein from Macaca mulatta (Rhesus macaque).